The sequence spans 378 residues: Alginate lyase (378 aa).

The first 28 residues, Met1–Ala28, serve as a signal peptide directing secretion. Residues Ser67–Lys68, His140–Thr141, and Tyr258 contribute to the substrate site.

This sequence belongs to the polysaccharide lyase 5 family.

It localises to the periplasm. The enzyme catalyses Eliminative cleavage of alginate to give oligosaccharides with 4-deoxy-alpha-L-erythro-hex-4-enuronosyl groups at their non-reducing ends and beta-D-mannuronate at their reducing end.. Its activity is regulated as follows. The monovalent cation sodium enhances activity but is not absolutely required. Catalyzes the depolymerization of alginate by cleaving the beta-1,4 glycosidic bond between two adjacent sugar residues via a beta-elimination mechanism. Degrades deacetylated polymannuronate (polyM) alginate from P.aeruginosa more efficiently than non-deacetylated polyM and alginate from M.pyrifera. AlgL from P.syringae also degrades its own alginate, which may indicate a role in cleaving preformed alginate and/or in determining the length of the alginate polymer. May serve to degrade mislocalized alginate that is trapped in the periplasmic space. The chain is Alginate lyase from Pseudomonas syringae pv. syringae.